A 430-amino-acid chain; its full sequence is Adenylosuccinate synthetase (430 aa).

GTP contacts are provided by residues 12-18 (GDEGKGK) and 40-42 (GHT). Catalysis depends on D13, which acts as the Proton acceptor. Mg(2+) is bound by residues D13 and G40. IMP contacts are provided by residues 13–16 (DEGK), 38–41 (NAGH), T128, R142, Q223, T238, and R302. H41 acts as the Proton donor in catalysis. Substrate is bound at residue 298–304 (VNTGRKR). GTP contacts are provided by residues R304, 330–332 (KLD), and 412–414 (GVG).

Belongs to the adenylosuccinate synthetase family. In terms of assembly, homodimer. Requires Mg(2+) as cofactor.

It localises to the cytoplasm. It carries out the reaction IMP + L-aspartate + GTP = N(6)-(1,2-dicarboxyethyl)-AMP + GDP + phosphate + 2 H(+). Its pathway is purine metabolism; AMP biosynthesis via de novo pathway; AMP from IMP: step 1/2. Its function is as follows. Plays an important role in the de novo pathway of purine nucleotide biosynthesis. Catalyzes the first committed step in the biosynthesis of AMP from IMP. This Corynebacterium glutamicum (strain ATCC 13032 / DSM 20300 / JCM 1318 / BCRC 11384 / CCUG 27702 / LMG 3730 / NBRC 12168 / NCIMB 10025 / NRRL B-2784 / 534) protein is Adenylosuccinate synthetase.